The chain runs to 458 residues: Bifunctional protein GlmU (458 aa).

Positions 1 to 230 (MHKRTAVVLA…EREILGINSR (230 aa)) are pyrophosphorylase. UDP-N-acetyl-alpha-D-glucosamine is bound by residues 9 to 12 (LAAG), Lys23, Gln73, and 78 to 79 (GT). Asp103 serves as a coordination point for Mg(2+). 4 residues coordinate UDP-N-acetyl-alpha-D-glucosamine: Gly140, Glu155, Asn170, and Asn228. Residue Asn228 coordinates Mg(2+). Residues 231–251 (VQLAEAEAVLQDRLRRKWMDA) are linker. The segment at 252 to 458 (GVTLIDPPSV…FLGRKHKGSQ (207 aa)) is N-acetyltransferase. Residues Arg333 and Lys351 each contribute to the UDP-N-acetyl-alpha-D-glucosamine site. The Proton acceptor role is filled by His363. 2 residues coordinate UDP-N-acetyl-alpha-D-glucosamine: Tyr366 and Asn377. Acetyl-CoA-binding positions include Ala380, 386 to 387 (NY), Ser405, Ala423, and Arg440.

The protein in the N-terminal section; belongs to the N-acetylglucosamine-1-phosphate uridyltransferase family. This sequence in the C-terminal section; belongs to the transferase hexapeptide repeat family. As to quaternary structure, homotrimer. Mg(2+) serves as cofactor.

Its subcellular location is the cytoplasm. The catalysed reaction is alpha-D-glucosamine 1-phosphate + acetyl-CoA = N-acetyl-alpha-D-glucosamine 1-phosphate + CoA + H(+). The enzyme catalyses N-acetyl-alpha-D-glucosamine 1-phosphate + UTP + H(+) = UDP-N-acetyl-alpha-D-glucosamine + diphosphate. The protein operates within nucleotide-sugar biosynthesis; UDP-N-acetyl-alpha-D-glucosamine biosynthesis; N-acetyl-alpha-D-glucosamine 1-phosphate from alpha-D-glucosamine 6-phosphate (route II): step 2/2. It functions in the pathway nucleotide-sugar biosynthesis; UDP-N-acetyl-alpha-D-glucosamine biosynthesis; UDP-N-acetyl-alpha-D-glucosamine from N-acetyl-alpha-D-glucosamine 1-phosphate: step 1/1. It participates in bacterial outer membrane biogenesis; LPS lipid A biosynthesis. In terms of biological role, catalyzes the last two sequential reactions in the de novo biosynthetic pathway for UDP-N-acetylglucosamine (UDP-GlcNAc). The C-terminal domain catalyzes the transfer of acetyl group from acetyl coenzyme A to glucosamine-1-phosphate (GlcN-1-P) to produce N-acetylglucosamine-1-phosphate (GlcNAc-1-P), which is converted into UDP-GlcNAc by the transfer of uridine 5-monophosphate (from uridine 5-triphosphate), a reaction catalyzed by the N-terminal domain. This is Bifunctional protein GlmU from Heliobacterium modesticaldum (strain ATCC 51547 / Ice1).